The primary structure comprises 305 residues: N-acetyl-D-glucosamine kinase (305 aa).

ATP contacts are provided by residues 4–11 and 133–140; these read GFDIGGTK and GFGGGLVF. Residues His-157, Cys-178, Cys-180, and Cys-185 each coordinate Zn(2+).

This sequence belongs to the ROK (NagC/XylR) family. NagK subfamily.

It carries out the reaction N-acetyl-D-glucosamine + ATP = N-acetyl-D-glucosamine 6-phosphate + ADP + H(+). It participates in cell wall biogenesis; peptidoglycan recycling. Catalyzes the phosphorylation of N-acetyl-D-glucosamine (GlcNAc) derived from cell-wall degradation, yielding GlcNAc-6-P. This is N-acetyl-D-glucosamine kinase from Histophilus somni (strain 129Pt) (Haemophilus somnus).